Here is a 449-residue protein sequence, read N- to C-terminus: MAAQAAPELAKLDLNKNTGSVEANAVSAGGSEKEEAENEGDSDDDRDDEQAGGSAEVNAEKKKKKKRPKKKKKTAKVQSSPPRIPLTTLFPNSNFPEGEIVEYLNENSYRTTNEEKRHLDRMNNDFLTEYRQAAEIHRQVRQYAQKELIKPGATLTDIAEGIEDGVRHLTGHMGLEEGDSLVAGMGFPTGLNINHCAAHYSPNAGNKVVLQHGDVMKVDFGVHINGRIVDSAFTVAFDPVFDPLLTAVKEATNTGIKEAGIDVRMSDIGAAIQETMESYELELNGTSYPIKAIRNLNGHTIGQYEIHGGVNGKSVPIVKGGDQTKMEEGETYAIETFGSTGKGYVRDDMETSHYAKVPNAPSVPLRLSSAKNLYSLINKNFGTLPFCRRYLDRLGQEKYLLGLNNLVSSGLVDAYPPLCDVKGSYTAQFEHTILLRPNVKEVISRGDDY.

Residues 1-91 (MAAQAAPELA…PRIPLTTLFP (91 aa)) form a disordered region. A compositionally biased stretch (acidic residues) spans 34-50 (EEAENEGDSDDDRDDEQ). Over residues 61 to 75 (KKKKKKRPKKKKKTA) the composition is skewed to basic residues. His-199 lines the substrate pocket. A divalent metal cation contacts are provided by Asp-219, Asp-230, and His-299. His-307 contributes to the substrate binding site. The a divalent metal cation site is built by Glu-335 and Glu-430.

This sequence belongs to the peptidase M24A family. Methionine aminopeptidase eukaryotic type 2 subfamily. Co(2+) is required as a cofactor. The cofactor is Zn(2+). It depends on Mn(2+) as a cofactor. Fe(2+) serves as cofactor.

The protein localises to the cytoplasm. The enzyme catalyses Release of N-terminal amino acids, preferentially methionine, from peptides and arylamides.. Functionally, cotranslationally removes the N-terminal methionine from nascent proteins. The N-terminal methionine is often cleaved when the second residue in the primary sequence is small and uncharged (Met-Ala-, Cys, Gly, Pro, Ser, Thr, or Val). The polypeptide is Methionine aminopeptidase 2 (Arthroderma benhamiae (strain ATCC MYA-4681 / CBS 112371) (Trichophyton mentagrophytes)).